We begin with the raw amino-acid sequence, 275 residues long: 3',5'-cyclic adenosine monophosphate phosphodiesterase CpdA (275 aa).

Fe cation-binding residues include D22, H24, D64, N94, H164, H203, and H205. Residues H24, D64, and 94–95 (NH) each bind AMP. H205 lines the AMP pocket.

The protein belongs to the cyclic nucleotide phosphodiesterase class-III family. Fe(2+) is required as a cofactor.

The enzyme catalyses 3',5'-cyclic AMP + H2O = AMP + H(+). Functionally, hydrolyzes cAMP to 5'-AMP. Plays an important regulatory role in modulating the intracellular concentration of cAMP, thereby influencing cAMP-dependent processes. The chain is 3',5'-cyclic adenosine monophosphate phosphodiesterase CpdA from Escherichia coli O157:H7.